Reading from the N-terminus, the 410-residue chain is Multifunctional CCA protein (410 aa).

Residues Gly-8 and Arg-11 each coordinate ATP. 2 residues coordinate CTP: Gly-8 and Arg-11. The Mg(2+) site is built by Asp-21 and Asp-23. Positions 91, 138, and 141 each coordinate ATP. 3 residues coordinate CTP: Arg-91, Arg-138, and Arg-141. In terms of domain architecture, HD spans 229-347 (TGIHQEMVSD…AQLALVCEAD (119 aa)).

It belongs to the tRNA nucleotidyltransferase/poly(A) polymerase family. Bacterial CCA-adding enzyme type 1 subfamily. In terms of assembly, monomer. Can also form homodimers and oligomers. The cofactor is Mg(2+). Ni(2+) serves as cofactor.

The catalysed reaction is a tRNA precursor + 2 CTP + ATP = a tRNA with a 3' CCA end + 3 diphosphate. It catalyses the reaction a tRNA with a 3' CCA end + 2 CTP + ATP = a tRNA with a 3' CCACCA end + 3 diphosphate. Functionally, catalyzes the addition and repair of the essential 3'-terminal CCA sequence in tRNAs without using a nucleic acid template. Adds these three nucleotides in the order of C, C, and A to the tRNA nucleotide-73, using CTP and ATP as substrates and producing inorganic pyrophosphate. tRNA 3'-terminal CCA addition is required both for tRNA processing and repair. Also involved in tRNA surveillance by mediating tandem CCA addition to generate a CCACCA at the 3' terminus of unstable tRNAs. While stable tRNAs receive only 3'-terminal CCA, unstable tRNAs are marked with CCACCA and rapidly degraded. This chain is Multifunctional CCA protein, found in Xanthomonas axonopodis pv. citri (strain 306).